Here is a 57-residue protein sequence, read N- to C-terminus: Cold shock protein CspB (57 aa).

The 57-residue stretch at 1-57 folds into the CSD domain; the sequence is IKWFNSEKGFGFIEVEGQDDVFVHFSAIQGEGFKCLEEGQAVSFEIVEGNRGPQAAN.

As to quaternary structure, homodimer.

It is found in the cytoplasm. Affects cell viability at low temperatures. This is Cold shock protein CspB (cspB) from Sporosarcina globispora (Bacillus globisporus).